A 176-amino-acid chain; its full sequence is NAD(P)H-quinone oxidoreductase subunit 6, chloroplastic (176 aa).

The next 5 membrane-spanning stretches (helical) occupy residues Phe10 to Ala30, Ile33 to Ala53, Ala61 to Ile81, Leu92 to Ile112, and Phe152 to Ala172.

It belongs to the complex I subunit 6 family. As to quaternary structure, NDH is composed of at least 16 different subunits, 5 of which are encoded in the nucleus.

The protein localises to the plastid. Its subcellular location is the chloroplast thylakoid membrane. The enzyme catalyses a plastoquinone + NADH + (n+1) H(+)(in) = a plastoquinol + NAD(+) + n H(+)(out). The catalysed reaction is a plastoquinone + NADPH + (n+1) H(+)(in) = a plastoquinol + NADP(+) + n H(+)(out). Functionally, NDH shuttles electrons from NAD(P)H:plastoquinone, via FMN and iron-sulfur (Fe-S) centers, to quinones in the photosynthetic chain and possibly in a chloroplast respiratory chain. The immediate electron acceptor for the enzyme in this species is believed to be plastoquinone. Couples the redox reaction to proton translocation, and thus conserves the redox energy in a proton gradient. This Guizotia abyssinica (Niger) protein is NAD(P)H-quinone oxidoreductase subunit 6, chloroplastic (ndhG).